Reading from the N-terminus, the 490-residue chain is Protein twist (490 aa).

3 disordered regions span residues 48-72 (QLQH…QHAQ), 96-165 (PSNE…TGGS), and 244-264 (QQQQ…HAQM). Over residues 54–68 (QHLHSHQHHQQHHQQ) the composition is skewed to basic residues. Composition is skewed to low complexity over residues 102–134 (STSS…NPSG) and 244–263 (QQQQ…SHAQ). Phosphoserine occurs at positions 325 and 328. The tract at residues 330–361 (LDGSDAGGKAFRKPRRRLKRKPSKTEETDEFS) is disordered. Over residues 339 to 351 (AFRKPRRRLKRKP) the composition is skewed to basic residues. Positions 362–413 (NQRVMANVRERQRTQSLNDAFKSLQQIIPTLPSDKLSKIQTLKLATRYIDFL) constitute a bHLH domain.

In terms of assembly, efficient DNA binding requires dimerization with another bHLH protein. Homodimer. Interacts with akirin. Expressed in embryonic abdomen; a single cell ventrally, pairs of cells laterally and three cells dorsally in each hemisegment. In the thorax, there are patches of cells associated with the imaginal disks. During larval development, cells proliferate and, in the abdomen, they form ventral, lateral and dorsal clusters, which are the precursors of the adult abdominal muscles. In the thorax, they form populations of cells in the imaginal disks that correspond to the adepithelial cells.

It localises to the nucleus. In terms of biological role, involved in the establishment and dorsoventral patterning of germ layers in the embryo. This is Protein twist (twi) from Drosophila melanogaster (Fruit fly).